Here is a 308-residue protein sequence, read N- to C-terminus: GTP-binding protein RAD (308 aa).

Residues Met1 to Gly16 are compositionally biased toward gly residues. The disordered stretch occupies residues Met1–Asp88. An Omega-N-methylarginine modification is found at Arg24. Ser26 carries the phosphoserine modification. Low complexity predominate over residues Gln48 to Pro68. GTP contacts are provided by residues Gly98–Ser105 and Asn203–Asp206. The tract at residues Ala278–Ala297 is calmodulin-binding.

Belongs to the small GTPase superfamily. RGK family. As to quaternary structure, interacts with calmodulin preferentially in the inactive, GDP-bound form. Binds CAMKII which is capable of phosphorylating RAD in vitro. Interacts with CAMK2D. Interacts with CACNB2; interaction may be involved in beta-adrenergic regulation of heart rate and contractile force. Interaction with CACNB2 regulates the trafficking of CACNA1C to the cell membrane. Most abundantly expressed in the heart. Also found in the skeletal muscle and lung. Lesser amounts in placenta and kidney. Also detected in adipose tissue. Overexpressed in muscle of type II diabetic humans.

The protein resides in the cell membrane. Its function is as follows. May regulate basal voltage-dependent L-type Ca(2+) currents and be required for beta-adrenergic augmentation of Ca(2+) influx in cardiomyocytes, thereby regulating increases in heart rate and contractile force. May play an important role in cardiac antiarrhythmia via the strong suppression of voltage-gated L-type Ca(2+) currents. Regulates voltage-dependent L-type calcium channel subunit alpha-1C trafficking to the cell membrane. Inhibits cardiac hypertrophy through the calmodulin-dependent kinase II (CaMKII) pathway. Inhibits phosphorylation and activation of CAMK2D. The polypeptide is GTP-binding protein RAD (RRAD) (Homo sapiens (Human)).